We begin with the raw amino-acid sequence, 130 residues long: UPF0102 protein RSc3265 (130 aa).

The protein belongs to the UPF0102 family.

The polypeptide is UPF0102 protein RSc3265 (Ralstonia nicotianae (strain ATCC BAA-1114 / GMI1000) (Ralstonia solanacearum)).